The chain runs to 482 residues: UDP-N-acetylmuramate--L-alanine ligase (482 aa).

129-135 is a binding site for ATP; the sequence is GTHGKTT.

It belongs to the MurCDEF family.

The protein resides in the cytoplasm. The enzyme catalyses UDP-N-acetyl-alpha-D-muramate + L-alanine + ATP = UDP-N-acetyl-alpha-D-muramoyl-L-alanine + ADP + phosphate + H(+). Its pathway is cell wall biogenesis; peptidoglycan biosynthesis. Functionally, cell wall formation. The sequence is that of UDP-N-acetylmuramate--L-alanine ligase from Acinetobacter baylyi (strain ATCC 33305 / BD413 / ADP1).